The sequence spans 227 residues: Small heat shock protein hspG3 (227 aa).

The 197-residue stretch at 31–227 folds into the sHSP domain; that stretch reads NKRVDIIPSM…SSNTIKININ (197 aa). Positions 119-164 are disordered; sequence QQQQLENSNKENDEPSIEEFEEDVKSKSELNKTTLNTTENKDEDKT.

This sequence belongs to the small heat shock protein (HSP20) family.

The sequence is that of Small heat shock protein hspG3 (hspG3) from Dictyostelium discoideum (Social amoeba).